The chain runs to 662 residues: UvrABC system protein B (662 aa).

The region spanning 31-188 is the Helicase ATP-binding domain; it reads DNIEGGEKAQ…NDLVDIQFER (158 aa). 44–51 lines the ATP pocket; it reads GATGTGKT. Residues 97 to 120 carry the Beta-hairpin motif; it reads YYDYYQPEAYVPSSDTYIEKDSSV. The Helicase C-terminal domain maps to 435-601; the sequence is QIDDLLGEIN…TIKKEIRDLI (167 aa). In terms of domain architecture, UVR spans 626–661; the sequence is KELVKKLEKQMQEAVEVLDFELAAQIRDMMLEVKAL.

The protein belongs to the UvrB family. In terms of assembly, forms a heterotetramer with UvrA during the search for lesions. Interacts with UvrC in an incision complex.

The protein localises to the cytoplasm. The UvrABC repair system catalyzes the recognition and processing of DNA lesions. A damage recognition complex composed of 2 UvrA and 2 UvrB subunits scans DNA for abnormalities. Upon binding of the UvrA(2)B(2) complex to a putative damaged site, the DNA wraps around one UvrB monomer. DNA wrap is dependent on ATP binding by UvrB and probably causes local melting of the DNA helix, facilitating insertion of UvrB beta-hairpin between the DNA strands. Then UvrB probes one DNA strand for the presence of a lesion. If a lesion is found the UvrA subunits dissociate and the UvrB-DNA preincision complex is formed. This complex is subsequently bound by UvrC and the second UvrB is released. If no lesion is found, the DNA wraps around the other UvrB subunit that will check the other stand for damage. The polypeptide is UvrABC system protein B (Streptococcus pneumoniae (strain Hungary19A-6)).